The primary structure comprises 242 residues: ATP synthase subunit a (242 aa).

The next 5 helical transmembrane spans lie at 21–41 (LSSI…AIIC), 79–99 (FHFL…LGLP), 116–136 (DATV…FYGV), 173–193 (LYGN…LVTG), and 198–218 (AWGW…SIFI).

Belongs to the ATPase A chain family. F-type ATPases have 2 components, CF(1) - the catalytic core - and CF(0) - the membrane proton channel. CF(1) has five subunits: alpha(3), beta(3), gamma(1), delta(1), epsilon(1). CF(0) has three main subunits: a(1), b(2) and c(9-12). The alpha and beta chains form an alternating ring which encloses part of the gamma chain. CF(1) is attached to CF(0) by a central stalk formed by the gamma and epsilon chains, while a peripheral stalk is formed by the delta and b chains.

The protein localises to the cell membrane. In terms of biological role, key component of the proton channel; it plays a direct role in the translocation of protons across the membrane. The protein is ATP synthase subunit a of Staphylococcus saprophyticus subsp. saprophyticus (strain ATCC 15305 / DSM 20229 / NCIMB 8711 / NCTC 7292 / S-41).